A 385-amino-acid chain; its full sequence is 1-deoxy-D-xylulose 5-phosphate reductoisomerase (385 aa).

Residues Thr10, Gly11, Ser12, Ile13, Gly36, Asn38, and Asn122 each coordinate NADPH. Lys123 lines the 1-deoxy-D-xylulose 5-phosphate pocket. Residue Glu124 coordinates NADPH. Asp148 contributes to the Mn(2+) binding site. Ser149, Glu150, Ser174, and His197 together coordinate 1-deoxy-D-xylulose 5-phosphate. Residue Glu150 participates in Mn(2+) binding. Gly203 is an NADPH binding site. 1-deoxy-D-xylulose 5-phosphate contacts are provided by Ser210, Asn215, Lys216, and Glu219. Glu219 is a Mn(2+) binding site.

It belongs to the DXR family. Mg(2+) is required as a cofactor. The cofactor is Mn(2+).

The catalysed reaction is 2-C-methyl-D-erythritol 4-phosphate + NADP(+) = 1-deoxy-D-xylulose 5-phosphate + NADPH + H(+). It functions in the pathway isoprenoid biosynthesis; isopentenyl diphosphate biosynthesis via DXP pathway; isopentenyl diphosphate from 1-deoxy-D-xylulose 5-phosphate: step 1/6. In terms of biological role, catalyzes the NADPH-dependent rearrangement and reduction of 1-deoxy-D-xylulose-5-phosphate (DXP) to 2-C-methyl-D-erythritol 4-phosphate (MEP). The chain is 1-deoxy-D-xylulose 5-phosphate reductoisomerase from Citrifermentans bemidjiense (strain ATCC BAA-1014 / DSM 16622 / JCM 12645 / Bem) (Geobacter bemidjiensis).